The primary structure comprises 473 residues: 3-isopropylmalate dehydratase large subunit 2 (473 aa).

[4Fe-4S] cluster is bound by residues Cys350, Cys410, and Cys413.

It belongs to the aconitase/IPM isomerase family. LeuC type 1 subfamily. In terms of assembly, heterodimer of LeuC and LeuD. It depends on [4Fe-4S] cluster as a cofactor.

The enzyme catalyses (2R,3S)-3-isopropylmalate = (2S)-2-isopropylmalate. It functions in the pathway amino-acid biosynthesis; L-leucine biosynthesis; L-leucine from 3-methyl-2-oxobutanoate: step 2/4. Catalyzes the isomerization between 2-isopropylmalate and 3-isopropylmalate, via the formation of 2-isopropylmaleate. In Salmonella typhimurium (strain LT2 / SGSC1412 / ATCC 700720), this protein is 3-isopropylmalate dehydratase large subunit 2.